The primary structure comprises 694 residues: Elongation factor G (694 aa).

In terms of domain architecture, tr-type G spans 9 to 288 (DAIRNIGIMA…VIVKWLPSPL (280 aa)). Residues 18–25 (AHIDAGKT), 82–86 (DTPGH), and 136–139 (NKMD) contribute to the GTP site.

Belongs to the TRAFAC class translation factor GTPase superfamily. Classic translation factor GTPase family. EF-G/EF-2 subfamily.

Its subcellular location is the cytoplasm. Functionally, catalyzes the GTP-dependent ribosomal translocation step during translation elongation. During this step, the ribosome changes from the pre-translocational (PRE) to the post-translocational (POST) state as the newly formed A-site-bound peptidyl-tRNA and P-site-bound deacylated tRNA move to the P and E sites, respectively. Catalyzes the coordinated movement of the two tRNA molecules, the mRNA and conformational changes in the ribosome. This Chlamydia trachomatis serovar L2b (strain UCH-1/proctitis) protein is Elongation factor G.